Consider the following 1032-residue polypeptide: Connector enhancer of kinase suppressor of ras 2 (1032 aa).

One can recognise an SAM domain in the interval 11–76 (WSPSQVVDWM…LEAVDLLCAL (66 aa)). S12 bears the Phosphoserine mark. In terms of domain architecture, CRIC spans 84-178 (NLKTLSHKLN…TIVQQDCTVY (95 aa)). The region spanning 215–297 (VIQLANIKPS…GVILTLKKRP (83 aa)) is the PDZ domain. Residues 302–515 (TSAPALLKNM…PAHYSLLPSL (214 aa)) enclose the DUF1170 domain. Over residues 324-340 (RSPTSSVATPSSTISTP) the composition is skewed to low complexity. The segment at 324-349 (RSPTSSVATPSSTISTPTKRDSSALQ) is disordered. Phosphoserine occurs at positions 338 and 390. 2 disordered regions span residues 480-509 (EEYM…PAHY) and 538-558 (FQQS…ISGK). The segment covering 545–558 (HKSKKKNKGAISGK) has biased composition (basic residues). The PH domain occupies 570–669 (RGDCEGWLWK…WLNRINMLTA (100 aa)). The tract at residues 682–766 (DYWSESDKEE…PIRKTASQRR (85 aa)) is disordered. Phosphotyrosine is present on Y683. Residues 683–693 (YWSESDKEEAD) show a composition bias toward acidic residues. 2 positions are modified to phosphoserine: S685 and S687. Residues 701 to 714 (DSPPPPYDTYPRPP) are compositionally biased toward pro residues. Residues 730–740 (LSSTETSQSQS) are compositionally biased toward low complexity. Phosphoserine occurs at positions 756 and 767. Residues 864–900 (ACDPQDDIQPPEVEEEEEEEEEEAAGENVGEKNENRE) are disordered. Residues 874-917 (PEVEEEEEEEEEEAAGENVGEKNENREEKLGDSLQDLYRALEEA) are a coiled coil. Residues 875-888 (EVEEEEEEEEEEAA) show a composition bias toward acidic residues. S906 carries the phosphoserine modification.

This sequence belongs to the CNKSR family. In terms of assembly, interacts with RAF1, RAB2L and RAL GTPase proteins. In terms of processing, phosphorylated on tyrosine.

It is found in the cytoplasm. The protein resides in the membrane. Its function is as follows. May function as an adapter protein or regulator of Ras signaling pathways. The protein is Connector enhancer of kinase suppressor of ras 2 (Cnksr2) of Mus musculus (Mouse).